A 295-amino-acid polypeptide reads, in one-letter code: Ribosomal protein L11 methyltransferase (295 aa).

S-adenosyl-L-methionine-binding residues include Thr-146, Gly-167, Asp-189, and Asn-231.

This sequence belongs to the methyltransferase superfamily. PrmA family.

Its subcellular location is the cytoplasm. It catalyses the reaction L-lysyl-[protein] + 3 S-adenosyl-L-methionine = N(6),N(6),N(6)-trimethyl-L-lysyl-[protein] + 3 S-adenosyl-L-homocysteine + 3 H(+). Its function is as follows. Methylates ribosomal protein L11. The polypeptide is Ribosomal protein L11 methyltransferase (Vibrio vulnificus (strain YJ016)).